Here is a 1476-residue protein sequence, read N- to C-terminus: Cystic fibrosis transmembrane conductance regulator (1476 aa).

Topologically, residues 1 to 77 (MQKSPLEKAS…QLIHALRRCF (77 aa)) are cytoplasmic. The chain crosses the membrane as a helical span at residues 78 to 98 (FWRFLFYGILLYLGEVTKAVQ). In terms of domain architecture, ABC transmembrane type-1 1 spans 81 to 365 (FLFYGILLYL…TAVQIWYDSF (285 aa)). Topologically, residues 99–122 (PVLLGRIIASYDPENKVERSIAIY) are extracellular. Residues 123–146 (LGIGLCLLFIVRTLLLHPAIFGLH) form a helical membrane-spanning segment. Over 147–195 (RIGMQMRTAMFSLIYKKTLKLSSRVLDKISIGQLVSLLSNNLNKFDEGL) the chain is Cytoplasmic. Residues 196 to 216 (ALAHFIWIAPLQVTLLMGLLW) traverse the membrane as a helical segment. Residues 217-222 (DLLQFS) lie on the Extracellular side of the membrane. The helical transmembrane segment at 223-243 (AFCGLGLLIILVIFQAILGKM) threads the bilayer. Topologically, residues 244–298 (MVKYRDQRAAKINERLVITSEIIDNIYSVKAYCWESAMEKMIENLREVELKMTRK) are cytoplasmic. A helical transmembrane segment spans residues 299–319 (AAYMRFFTSSAFFFSGFFVVF). The Extracellular segment spans residues 320–339 (LSVLPYTVINGIVLRKIFTT). The chain crosses the membrane as a helical span at residues 340 to 358 (ISFCIVLRMSVTRQFPTAV). The Cytoplasmic segment spans residues 359–853 (QIWYDSFGMI…YLRYFTLHKG (495 aa)). ATP-binding positions include Trp-401, 458–465 (GSTGSGKT), and Gln-493. An ABC transporter 1 domain is found at 423 to 646 (SDENNVSFSH…RPDFSSKLMG (224 aa)). Cys-524 carries S-palmitoyl cysteine lipidation. Residues Ser-549 and Ser-660 each carry the phosphoserine modification. The tract at residues 654–826 (TEERRSSILT…EEINEEDLKE (173 aa)) is disordered R region. Ser-670 is subject to Phosphoserine; by PKA. Ser-684, Ser-698, and Ser-710 each carry phosphoserine. Position 715 is a phosphothreonine (Thr-715). Ser-732, Ser-763, Ser-785, Ser-790, and Ser-808 each carry phosphoserine. The helical transmembrane segment at 854 to 874 (LLLVLIWCVLVFLVEVAASLF) threads the bilayer. The ABC transmembrane type-1 2 domain occupies 854–1153 (LLLVLIWCVL…SSIDTDSLMR (300 aa)). Over 875–913 (VLWLLKNNPVNSGNNGTKISNSSYVVIITSTSFYYIFYI) the chain is Extracellular. 2 N-linked (GlcNAc...) asparagine glycosylation sites follow: Asn-889 and Asn-895. Residues 914–934 (YVGVADTLLALSLFRGLPLVH) traverse the membrane as a discontinuously helical segment. At 935–985 (TLITASKILHRKMLHSILHAPMSTISKLKAGGILNRFSKDIAILDDFLPLT) the chain is on the cytoplasmic side. The chain crosses the membrane as a helical span at residues 986 to 1006 (IFDFIQLVFIVIGAIIVVSAL). Residues 1007-1008 (QP) lie on the Extracellular side of the membrane. The chain crosses the membrane as a helical span at residues 1009–1029 (YIFLATVPGLVVFILLRAYFL). The Cytoplasmic portion of the chain corresponds to 1030–1090 (HTAQQLKQLE…TANWFMYLAT (61 aa)). A helical membrane pass occupies residues 1091–1111 (LRWFQMRIDMIFVLFFIVVTF). Topologically, residues 1112 to 1125 (ISILTTGEGEGTAG) are extracellular. A helical membrane pass occupies residues 1126-1146 (IILTLAMNIMSTLQWAVNSSI). Topologically, residues 1147–1476 (DTDSLMRSVS…TEEEVQETRL (330 aa)) are cytoplasmic. One can recognise an ABC transporter 2 domain in the interval 1208–1439 (VKDLTVKYMD…KSIFQQAISS (232 aa)). ATP is bound by residues Tyr-1215 and 1240-1247 (GRTGSGKS). Residues 1382 to 1476 (RVLKQAFAGC…TEEEVQETRL (95 aa)) form an interaction with GORASP2 region. The S-palmitoyl cysteine moiety is linked to residue Cys-1391. Phosphoserine is present on residues Ser-1440 and Ser-1452. The disordered stretch occupies residues 1446-1476 (FQGRHSSKHKPRTQITALKEETEEEVQETRL). Over residues 1466 to 1476 (ETEEEVQETRL) the composition is skewed to acidic residues. A PDZ-binding motif is present at residues 1474-1476 (TRL).

This sequence belongs to the ABC transporter superfamily. ABCC family. CFTR transporter (TC 3.A.1.202) subfamily. As to quaternary structure, monomer; does not require oligomerization for channel activity. May form oligomers in the membrane. Interacts with SLC26A3, SLC26A6 and NHERF1. Interacts with SHANK2. Interacts with MYO6. Interacts (via C-terminus) with GOPC (via PDZ domain); this promotes CFTR internalization and thereby decreases channel activity. Interacts with SLC4A7 through NHERF1. Found in a complex with MYO5B and RAB11A. Interacts with ANO1. Interacts with SLC26A8. Interacts with AHCYL1; the interaction increases CFTR activity. Interacts with CSE1L. The core-glycosylated form interacts with GORASP2 (via PDZ GRASP-type 1 domain) in respone to ER stress. Interacts with MARCHF2; the interaction leads to CFTR ubiqtuitination and degradation. Interacts with ADGRG2. Post-translationally, N-glycosylated. Phosphorylated; cAMP treatment promotes phosphorylation and activates the channel. Dephosphorylation decreases the ATPase activity (in vitro). Phosphorylation at PKA sites activates the channel. Phosphorylation at PKC sites enhances the response to phosphorylation by PKA. Phosphorylated by AMPK; this inhibits channel activity. In terms of processing, ubiquitinated, leading to its degradation in the lysosome. Deubiquitination by USP10 in early endosomes enhances its endocytic recycling to the cell membrane. Ubiquitinated by RNF185 during ER stress. Ubiquitinated by MARCHF2. In terms of tissue distribution, expressed in the epididymis (at protein level). In the initial segment of the epididymis, detected on both the luminal and basolateral sides of the ducts where it is expressed in the duct columnar cells as well as in the interstitial smooth muscle cells. Expressed in sperm in the caput. In the cauda, detected along the luminal border but not continuously and is also expressed on the basolateral surface. Within the caudal lumen, detected on sperm. Isoform 1: Expressed in a variety of epithelial tissues including colon, kidney, lung, small intestine, pancreatic duct and testis. Isoform 2: Expressed only in testis. Isoform 3: Expressed only in testis.

The protein localises to the apical cell membrane. The protein resides in the early endosome membrane. It localises to the cell membrane. It is found in the recycling endosome membrane. Its subcellular location is the endoplasmic reticulum membrane. The protein localises to the nucleus. The catalysed reaction is ATP + H2O + closed Cl(-) channel = ADP + phosphate + open Cl(-) channel.. The enzyme catalyses chloride(in) = chloride(out). It carries out the reaction hydrogencarbonate(in) = hydrogencarbonate(out). It catalyses the reaction ATP + H2O = ADP + phosphate + H(+). In terms of biological role, epithelial ion channel that plays an important role in the regulation of epithelial ion and water transport and fluid homeostasis. Mediates the transport of chloride ions across the cell membrane. Possesses an intrinsic ATPase activity and utilizes ATP to gate its channel; the passive flow of anions through the channel is gated by cycles of ATP binding and hydrolysis by the ATP-binding domains. The ion channel is also permeable to HCO(3)(-); selectivity depends on the extracellular chloride concentration. Exerts its function also by modulating the activity of other ion channels and transporters. Contributes to the regulation of the pH and the ion content of the epithelial fluid layer. Modulates the activity of the epithelial sodium channel (ENaC) complex, in part by regulating the cell surface expression of the ENaC complex. May regulate bicarbonate secretion and salvage in epithelial cells by regulating the transporter SLC4A7. Can inhibit the chloride channel activity of ANO1. Plays a role in the chloride and bicarbonate homeostasis during sperm epididymal maturation and capacitation. The sequence is that of Cystic fibrosis transmembrane conductance regulator from Mus musculus (Mouse).